The primary structure comprises 82 residues: MNTKLVVVFLLSAILFVSVTASRPGKDLERDEAYETYDDERPYFKRACKDNLPAATCSNVKANNNCSSEKYKTNCAKTCGEC.

Positions 1 to 21 are cleaved as a signal peptide; that stretch reads MNTKLVVVFLLSAILFVSVTA. Positions 22-46 are excised as a propeptide; sequence SRPGKDLERDEAYETYDDERPYFKR. The ShKT domain maps to 48–82; sequence CKDNLPAATCSNVKANNNCSSEKYKTNCAKTCGEC. Cystine bridges form between cysteine 48–cysteine 82, cysteine 57–cysteine 75, and cysteine 66–cysteine 79. The segment at 70 to 71 is theoritically crucial for binding to potassium channels; that stretch reads KY.

Belongs to the sea anemone type 1 potassium channel toxin family. Type 1b subfamily.

It is found in the secreted. The protein localises to the nematocyst. Its function is as follows. Probable toxin with unknown function. In contrast to similar toxins, this toxin does not inhibit voltage-gated potassium channels (tested at 100 nM). Does not show antimicrobial activities against bacteria and yeasts. This Oulactis sp. (Sea anemone) protein is U-actitoxin-Oulsp2.